Consider the following 2556-residue polypeptide: Ubiquitin carboxyl-terminal hydrolase 9Y (2556 aa).

A compositionally biased stretch (polar residues) spans 1 to 33 (MTITTRGSPVGENESQGQTSDGQPQPSFQQNQI). Positions 1 to 68 (MTITTRGSPV…QHEEEDPSFP (68 aa)) are disordered. The span at 34–44 (SSSDSSNETSP) shows a compositional bias: low complexity. Position 587 is a phosphoserine (Ser587). Thr589 is modified (phosphothreonine). Residues 971–999 (NMPSSPDSSSDSSAGPPGNHSHNNYRDVS) are disordered. Residues 973-983 (PSSPDSSSDSS) show a composition bias toward low complexity. The region spanning 1559 to 1958 (VGLKNAGATC…NAYILFYERM (400 aa)) is the USP domain. The active-site Nucleophile is Cys1568. Zn(2+) contacts are provided by Cys1729, His1731, Cys1773, and Cys1776. His1881 (proton acceptor) is an active-site residue. Ser2447 carries the post-translational modification Phosphoserine. Residues 2513–2556 (QNYVPEQPFSGPASHHLNNPQKNDKPQETHESNEEISSCLIKDQ) form a disordered region. The segment covering 2534-2545 (KNDKPQETHESN) has biased composition (basic and acidic residues). Ser2549 bears the Phosphoserine mark.

It belongs to the peptidase C19 family.

It catalyses the reaction Thiol-dependent hydrolysis of ester, thioester, amide, peptide and isopeptide bonds formed by the C-terminal Gly of ubiquitin (a 76-residue protein attached to proteins as an intracellular targeting signal).. It functions in the pathway protein modification; protein ubiquitination. Deubiquitinase that mediates deubiquitination of target proteins. May stabilize target proteins that are important for male germ cell development. In Mus musculus (Mouse), this protein is Ubiquitin carboxyl-terminal hydrolase 9Y.